The sequence spans 137 residues: 15 kDa protein A (137 aa).

The first 20 residues, 1–20, serve as a signal peptide directing secretion; that stretch reads MAGVWKVLVVLVGLAVVACA. 2 disulfide bridges follow: C77–C88 and C99–C116.

The protein belongs to the cathelicidin family. As to expression, large granules of neutrophils.

It is found in the secreted. Its function is as follows. Binds to bacterial lipopolysaccharides (LPS), potentiates strongly the early antibacterial effects of BPI. Inhibits the late lethal action of BPI. This Oryctolagus cuniculus (Rabbit) protein is 15 kDa protein A.